The primary structure comprises 777 residues: Hepatocyte growth factor-regulated tyrosine kinase substrate (777 aa).

The VHS domain occupies 15-143 (ATSQLLLETD…IMKVEGHVFP (129 aa)). The FYVE-type zinc finger occupies 160–220 (WVDAEECHRC…VCEPCFEQLN (61 aa)). Zn(2+) is bound by residues Cys-166, Cys-169, Cys-182, Cys-185, Cys-190, and Cys-193. Position 207 is an N6-acetyllysine (Lys-207). The Zn(2+) site is built by Cys-212 and Cys-215. The disordered stretch occupies residues 223-319 (AEGKAASTTE…SPVNSSAPLA (97 aa)). The tract at residues 225–541 (GKAASTTELP…QRLQEQEKER (317 aa)) is interaction with SNX1. Positions 258–277 (QEEEELQLALALSQSEAEEK) constitute a UIM domain. A compositionally biased stretch (low complexity) spans 292-311 (AEPTPVASSAPPASSLYSSP). Phosphotyrosine occurs at positions 308, 329, and 334. A disordered region spans residues 338-370 (KQEEARKSPTPSAPVPLTEPTAQPGEGHAIPAN). Residues 443 to 541 (SINTMHPQLL…QRLQEQEKER (99 aa)) form an interaction with SNAP25 and TRAK2 region. The interaction with STAM stretch occupies residues 452-570 (LELLNQLDER…FSLPYAQLQA (119 aa)). The tract at residues 478–777 (ARGALSALRE…GSEAQLISFD (300 aa)) is interaction with NF2. N6-succinyllysine is present on Lys-549. A compositionally biased stretch (low complexity) spans 645–658 (AAAQGPAGPTTSPA). Disordered regions lie at residues 645-698 (AAAQ…YMGS) and 712-777 (NLMP…ISFD). Composition is skewed to polar residues over residues 659–698 (YSSY…YMGS) and 730–739 (PYISGQQPVY). Positions 753-777 (PPVAQQPPAQGPPAQGSEAQLISFD) are enriched in low complexity.

As to quaternary structure, component of the ESCRT-0 complex composed of STAM or STAM2 and HGS. Part of a complex at least composed of HSG, STAM2 (or probably STAM) and EPS15. Interacts with STAM. Interacts with STAM2. Interacts with EPS15; the interaction is direct, calcium-dependent and inhibited by SNAP25. Identified in a complex with STAM and LITAF. Found in a complex with STAM and E3 ligase ITCH and DTX3L. Interacts with E3 ligase DTX3L; the interaction brings together STAM and HSG, promotes their recruitment to early endosomes and decreases STAM and HGS ubiquitination by ITCH. Interacts with NF2; the interaction is direct. Interacts with ubiquitin; the interaction is direct. Interacts with VPS37C. Interacts with SMAD1, SMAD2 and SMAD3. Interacts with TSG101; the interaction mediates the association with the ESCRT-I complex. Interacts with SNAP25; the interaction is direct and decreases with addition of increasing concentrations of free calcium. Interacts with SNX1; the interaction is direct. Component of a 550 kDa membrane complex at least composed of HGS and SNX1 but excluding EGFR. Interacts with TRAK1. Interacts with TRAK2. Component of the CART complex, at least composed of ACTN4, HGS/HRS, MYO5B and TRIM3. Interacts (via UIM domain) with UBQLN1 (via ubiquitin-like domain). Interacts with ARRDC3. Identified in a complex containing at least ARRDC4, AVPR2 and HGS. Interacts with LAPTM4B; promotes HGS ubiquitination. Phosphorylated on Tyr-334. A minor site of phosphorylation on Tyr-329 is detected. Phosphorylation occurs in response to EGF, IL-2, GM-CSF and HGF. Post-translationally, ubiquitinated by ITCH.

It localises to the cytoplasm. The protein localises to the early endosome membrane. The protein resides in the endosome. It is found in the multivesicular body membrane. Functionally, involved in intracellular signal transduction mediated by cytokines and growth factors. When associated with STAM it suppresses DNA signaling upon stimulation by IL-2 and GM-CSF. Could be a direct effector of PI3-kinase in vesicular pathway via early endosomes and may regulate trafficking to early and late endosomes by recruiting clathrin. May concentrate ubiquitinated receptors within clathrin-coated regions. Involved in down-regulation of receptor tyrosine kinase via multivesicular body (MVBs) when complexed with STAM (ESCRT-0 complex). The ESCRT-0 complex binds ubiquitin and acts as a sorting machinery that recognizes ubiquitinated receptors and transfers them to further sequential lysosomal sorting/trafficking processes. May contribute to the efficient recruitment of SMADs to the activin receptor complex. Involved in receptor recycling via its association with the CART complex, a multiprotein complex required for efficient transferrin receptor recycling but not for EGFR degradation. The polypeptide is Hepatocyte growth factor-regulated tyrosine kinase substrate (HGS) (Bos taurus (Bovine)).